The following is a 466-amino-acid chain: Glycosyl hydrolase family 109 protein (466 aa).

A signal peptide (tat-type signal) is located at residues 1-30; it reads MENTRRSFLKKVSAAGIGAAGLAMAGNAGA. NAD(+)-binding positions include 59–60, Asp81, 130–133, 151–152, and Asn180; these read SR, WEWH, and EV. Substrate is bound at residue Tyr209. 241-245 contributes to the NAD(+) binding site; the sequence is AEAQW. Substrate-binding positions include Arg246, 258–261, and Tyr340; that span reads YPTH. Tyr258 is an NAD(+) binding site.

Belongs to the Gfo/Idh/MocA family. Glycosyl hydrolase 109 subfamily. Requires NAD(+) as cofactor. In terms of processing, predicted to be exported by the Tat system. The position of the signal peptide cleavage has not been experimentally proven.

Its function is as follows. Glycosidase. This is Glycosyl hydrolase family 109 protein from Parabacteroides distasonis (strain ATCC 8503 / DSM 20701 / CIP 104284 / JCM 5825 / NCTC 11152).